Consider the following 61-residue polypeptide: Large ribosomal subunit protein uL30 (61 aa).

It belongs to the universal ribosomal protein uL30 family. In terms of assembly, part of the 50S ribosomal subunit.

The protein is Large ribosomal subunit protein uL30 of Fervidobacterium nodosum (strain ATCC 35602 / DSM 5306 / Rt17-B1).